Consider the following 362-residue polypeptide: Endopolygalacturonase II (362 aa).

An N-terminal signal peptide occupies residues 1–21 (MHSFASLLAYGLVAGATFASA). Positions 22–27 (SPIEAR) are excised as a propeptide. An intrachain disulfide couples cysteine 30 to cysteine 45. A PbH1 1 repeat occupies 156–186 (ANDITFTDVTINNADGDTQGGHNTDAFDVGN). The active-site Proton donor is aspartate 201. A disulfide bond links cysteine 203 and cysteine 219. PbH1 repeat units lie at residues 209–229 (GENIWFTGGTCIGGHGLSIGS), 238–259 (VKNVTIEHSTVSNSENAVRIKT), 267–289 (VSEITYSNIVMSGISDYGVVIQQ), and 301–322 (TNGVTIQDVKLESVTGSVDSGA). Histidine 223 is a catalytic residue. Asparagine 240 carries N-linked (GlcNAc...) (high mannose) asparagine glycosylation. Cystine bridges form between cysteine 329/cysteine 334 and cysteine 353/cysteine 362.

Belongs to the glycosyl hydrolase 28 family.

It localises to the secreted. The enzyme catalyses (1,4-alpha-D-galacturonosyl)n+m + H2O = (1,4-alpha-D-galacturonosyl)n + (1,4-alpha-D-galacturonosyl)m.. Involved in maceration and soft-rotting of plant tissue. Hydrolyzes the 1,4-alpha glycosidic bonds of de-esterified pectate in the smooth region of the plant cell wall. The protein is Endopolygalacturonase II (pgaII) of Aspergillus niger (strain ATCC 1015 / CBS 113.46 / FGSC A1144 / LSHB Ac4 / NCTC 3858a / NRRL 328 / USDA 3528.7).